The sequence spans 60 residues: MDHRLLEIVACPVCNGRLYFNKEKLELICKADGLAYPVRDGIPVLLENEARKLGADEITQ.

This sequence belongs to the UPF0434 family.

The sequence is that of UPF0434 protein ECA2555 from Pectobacterium atrosepticum (strain SCRI 1043 / ATCC BAA-672) (Erwinia carotovora subsp. atroseptica).